Consider the following 441-residue polypeptide: NADH-quinone oxidoreductase subunit D (441 aa).

This sequence belongs to the complex I 49 kDa subunit family. In terms of assembly, NDH-1 is composed of 14 different subunits. Subunits NuoB, C, D, E, F, and G constitute the peripheral sector of the complex.

It localises to the cell membrane. The enzyme catalyses a quinone + NADH + 5 H(+)(in) = a quinol + NAD(+) + 4 H(+)(out). Functionally, NDH-1 shuttles electrons from NADH, via FMN and iron-sulfur (Fe-S) centers, to quinones in the respiratory chain. The immediate electron acceptor for the enzyme in this species is believed to be a menaquinone. Couples the redox reaction to proton translocation (for every two electrons transferred, four hydrogen ions are translocated across the cytoplasmic membrane), and thus conserves the redox energy in a proton gradient. This is NADH-quinone oxidoreductase subunit D from Mycobacterium avium (strain 104).